We begin with the raw amino-acid sequence, 337 residues long: Secreted effector protein EspF(U) (337 aa).

5 consecutive repeat copies span residues 96 to 142 (IKPA…AEHG), 143 to 189 (IQPA…AEHG), 190 to 236 (IQPA…AEHG), 237 to 283 (IQPA…AEHG), and 284 to 330 (IQPA…AEHG). A 5 X 48 AA approximate tandem repeats region spans residues 96–330 (IKPARSMAEH…RLMQHLAEHG (235 aa)). The tract at residues 291–312 (AEHIPPAPNWPAPTPPVQNEQS) is disordered. Residues 295 to 306 (PPAPNWPAPTPP) are compositionally biased toward pro residues.

The protein belongs to the EspF(U)/TccP family. In terms of assembly, interacts with host BAIAP2 and host WASL/N-WASP. Can also interact with host proteins BAIAP2L1 and WAS/WASP.

The protein localises to the secreted. It is found in the host cytoplasm. In terms of biological role, required for efficient pedestal formation in host epithelial cells during infection. Acts as an intermediate between Tir (via host BAIAP2) and host WASL/N-WASP. Directly binds and activates WASL/N-WASP, which stimulates actin polymerization and leads to the formation of actin pedestals at the sites of bacterial adhesion. The chain is Secreted effector protein EspF(U) (espF(U)) from Escherichia coli O157:H7.